The primary structure comprises 100 residues: A-type ATP synthase subunit F (100 aa).

Belongs to the V-ATPase F subunit family. Has multiple subunits with at least A(3), B(3), C, D, E, F, H, I and proteolipid K(x).

It is found in the cell membrane. Component of the A-type ATP synthase that produces ATP from ADP in the presence of a proton gradient across the membrane. This chain is A-type ATP synthase subunit F, found in Methanoregula boonei (strain DSM 21154 / JCM 14090 / 6A8).